The primary structure comprises 727 residues: Phenylalanine ammonia-lyase str11 (727 aa).

Y105 acts as the Proton donor/acceptor in catalysis. Positions 210 to 212 (ASG) form a cross-link, 5-imidazolinone (Ala-Gly). Residue S211 is modified to 2,3-didehydroalanine (Ser). The (E)-cinnamate site is built by N271, Q361, R367, N397, K468, E496, and N499.

This sequence belongs to the PAL/histidase family. Post-translationally, contains an active site 4-methylidene-imidazol-5-one (MIO), which is formed autocatalytically by cyclization and dehydration of residues Ala-Ser-Gly.

It carries out the reaction L-phenylalanine = (E)-cinnamate + NH4(+). Its pathway is mycotoxin biosynthesis. In terms of biological role, phenylalanine ammonia-lyase; part of the gene cluster that mediates the biosynthesis of strobilurin A, an antifungal polyketide that contains a key beta-methoxyacrylate toxophore that targets the complex III of the mitochondrial electron transport chain. Strobilurin biosynthesis begins with construction of benzoyl CoA by step-wise elimination of ammonia from phenylalanine by the phenylalanine ammonia-lyase str11, oxygenation by str8 and retro-Claisen reaction to form benzoic acid, which is activated to its CoA thiolester benzoyl CoA by the dedicated CoA ligase str10. Benzoyl CoA forms the starter unit for the highly reducing polyketide synthase stpks1 that produces the polyketide prestrobilutin A. The FAD-dependent oxygenase str9 then catalyzes the key oxidative rearrangement responsible for the creation of the beta-methoxyacrylate toxophore. Str9 performs epoxidation of the 2,3 olefin of prestrobilutin A, followed by Meinwald rearrangement to furnish the aldehyde intermediate. Rapid enolization of the aldehyde intermediate would give the beta-methoxyacrylate skeleton and methylations catalyzed by str2 and str3 complete the synthesis and lead to the production of strobilurin A. The short-chain dehydrogenase stl2 and the dehydrogenase str4 play a role in the shunt pathway leading to the production of bolineol. The cluster encodes no obvious halogenase gene that could be involved in production of strobilurin B, nor any obvious dimethylallyl-transferase that could be involved in the production of strobilurin G. It is possible that unknown proteins encoded in, or near, the cluster (such as str1 or stl1) may form new classes of halogenases or dimethylally-transferases, or that the responsible genes are located elsewhere on the genome. Similarly, proteins encoded by str5/str6 hydrolases appear to have no chemical role in the biosynthesis of strobilurin A. Finally, no obvious self-resistance gene is found within the cluster. The protein is Phenylalanine ammonia-lyase str11 of Strobilurus tenacellus.